Here is a 215-residue protein sequence, read N- to C-terminus: Glycerol-3-phosphate acyltransferase (215 aa).

Helical transmembrane passes span 14 to 34 (SSSA…AVVV), 63 to 83 (TAAA…LWLA), 92 to 112 (WGAY…PLFL), 128 to 148 (MAIE…VAVF), and 154 to 174 (LAAL…SGAA).

This sequence belongs to the PlsY family. In terms of assembly, probably interacts with PlsX.

The protein localises to the cell inner membrane. The enzyme catalyses an acyl phosphate + sn-glycerol 3-phosphate = a 1-acyl-sn-glycero-3-phosphate + phosphate. The protein operates within lipid metabolism; phospholipid metabolism. In terms of biological role, catalyzes the transfer of an acyl group from acyl-phosphate (acyl-PO(4)) to glycerol-3-phosphate (G3P) to form lysophosphatidic acid (LPA). This enzyme utilizes acyl-phosphate as fatty acyl donor, but not acyl-CoA or acyl-ACP. This Bordetella bronchiseptica (strain ATCC BAA-588 / NCTC 13252 / RB50) (Alcaligenes bronchisepticus) protein is Glycerol-3-phosphate acyltransferase.